The following is a 215-amino-acid chain: Adenylate kinase (215 aa).

An ATP-binding site is contributed by 10–15; sequence GAGKGT. An NMP region spans residues 30–60; sequence STGDMLRAAIIKAGTEMGKQAKSVIDAGQLV. AMP is bound by residues threonine 31, arginine 36, 58 to 60, 86 to 89, and glutamine 93; these read QLV and GFPR. The LID stretch occupies residues 123 to 160; the sequence is GRRAHLPSGRTYHVTFNPSKVEGQDDVTGEPLVIREDD. Residues arginine 124 and 133–134 each bind ATP; that span reads TY. Residues arginine 157 and arginine 168 each coordinate AMP. Lysine 201 serves as a coordination point for ATP.

The protein belongs to the adenylate kinase family. As to quaternary structure, monomer.

It localises to the cytoplasm. The catalysed reaction is AMP + ATP = 2 ADP. Its pathway is purine metabolism; AMP biosynthesis via salvage pathway; AMP from ADP: step 1/1. In terms of biological role, catalyzes the reversible transfer of the terminal phosphate group between ATP and AMP. Plays an important role in cellular energy homeostasis and in adenine nucleotide metabolism. In Aliivibrio salmonicida (strain LFI1238) (Vibrio salmonicida (strain LFI1238)), this protein is Adenylate kinase.